Here is a 749-residue protein sequence, read N- to C-terminus: Taperin (749 aa).

Residues 144–348 (PAAPCRRGSP…IRPSSKPDME (205 aa)) are disordered. 3 stretches are compositionally biased toward polar residues: residues 169–179 (SAATRTPTNRS), 230–239 (LQKTGSNSFT), and 250–266 (VNRS…SPTG). Ser-274 is modified (phosphoserine). The span at 323-335 (QRQWVSSATSAND) shows a compositional bias: polar residues. The span at 337-347 (FEIRPSSKPDM) shows a compositional bias: basic and acidic residues. 3 positions are modified to phosphoserine: Ser-401, Ser-457, and Ser-501. Disordered regions lie at residues 502 to 586 (EEEA…TTLE), 636 to 673 (FEYP…SEKP), and 730 to 749 (LTPA…ALYF). Composition is skewed to polar residues over residues 534–544 (ELLNRGSNTFT) and 558–570 (HLSQ…QQGA). Acidic residues predominate over residues 647–668 (EEAEEEEEEEGEEDGEEEEVGP).

The protein belongs to the taperin family. In terms of assembly, interacts with GRXCR2; the interaction restricts TPRN to the stereocilum basal region. Interacts with actin ACTB; the interaction may stabilize stereocilia. Interacts with CLIC5. Interacts with PTPRQ. TPRN, CLIC5 and PTPQR form concentric rings at the base of stereocilia and may form a complex. Interacts with phosphatase PPP1CA; the interaction results in inhibition of PPP1CA phosphatase activity. Interacts with DNA damage response proteins XRCC6/KU70, XRCC5/KU80, PARP1, TOP1 and TOP2A; these interactions recruit TPRN to sites of DNA damage where it may play a role in DNA repair. In the organ of Corti, expressed in the inner ear hair cell stereocilia and the supporting cells (at protein level). Expressed in the sensory epithelia of the organ of Corti and vestibular end organs and, to a lesser extent, in Reisner's membrane and the spiral ligament (at protein level). At postnatal day 2, expression is detected in cochlea, liver, brain, kidney, heart and lung.

It localises to the cell projection. The protein resides in the stereocilium. The protein localises to the microvillus. It is found in the nucleus. Its subcellular location is the nucleoplasm. It localises to the cytoplasm. In terms of biological role, essential for hearing. Required for maintenance of stereocilia on both inner and outer hair cells. Necessary for the integrity of the stereociliary rootlet. May act as an actin cytoskeleton regulator involved in the regulation of actin dynamics at the pointed end in hair cells. Forms rings at the base of stereocilia and binds actin filaments in the stereocilia which may stabilize the stereocilia. Acts as a strong inhibitor of PPP1CA phosphatase activity. Recruited to sites of DNA damage and may play a role in DNA damage repair. The chain is Taperin (Tprn) from Mus musculus (Mouse).